The sequence spans 1349 residues: MRCASRSDELVFFVNGRKVMERNVDPEGTLLTFLRKNLRLTGTKYACGRGGCGACTVMVSKHDPVSRKIQRHFSVTACLMPICSLYGAAVTTVEGVGSIKTRLHPVQERIAKSHGTQCGFCTPGMVMSMYTLLRNHPQPSEEQLTEALGGNLCRCTGYRPILESGRTFCMESNSCQQKGTGKCCLDWGENDSSRLGKKNEICTKLFAKEEFQSLDPTQELIFPPELLRMAENPEKRTLTFYGERVTWISPGTLKDLLELKVKHPEAPLVVGNTSLGPAMKSQRQFHPVLLSPARISELSMVTKTSDGLTIGAGCSLAQTQDILAERIAELPEEKTQTYRALLKHLRSLAGQQIRNMASLGGHVISRHCCSDLNPVLAVSNATLNLISAEGTRQIPLNEHFLAGLASADLKPEEILESVHIPHSQKWEFVSAFRQAQCQQNALPHVNAGMRVLLKEGTDSIEDLSIAYGGVGAATISAHRSCQQLLGRRWNELMLDEACRLLLDEVSLPGSAPGGRVEFKRTLVVSFLFKFYLEVLQELKKLVKLFSVAVGADSRHRSEVSDQFLSALEDFPVTIPQGVQTYQNVDPHQPLQDPVGRPIMHLSALKHATGEAMFCDDIPVVDKELFMALVTSSRAHAKIISIDVSKALELPEVVDVITAEDIPGTNGAEGDKLLAVEEVTCVGQIICAVVAETDVQAKRATEKIEITYEDLEPVIFTIKDAIKHNSFLCPEKKLEQGNVEEAFEKVDQTIEGEVHVGGQEHFYMETQRVLVIPKTEDKELDIYVSTQDPAHVQKTVSSTLNIPINRITCHVKRVGGGFGGKVGKPAVFGAIAAVGAIKTGHPIRLVLDREDDMLITGGRHPLFGKYKVGFTNNGRIKALDIECYINGGCTLDDSELVTEFLILKLENAYKIRNLRFRGRACMTNLPSNTAFRGFGFPQGALVTESCITAVAAKCGLPPEKIREKNMYKTVDKTIYKQAFNPETLIRCWNECLDKSSFHSRRMQVEEFNKKNYWKKKGIAIIPMKFSVGFAATSYHQAAALVHIYTDGSVLVTHGGNELGQGIHTKMLQVASRELKIPMSCIHISETSTATVPNTIATAASVGADVNGRAVQNACQILLKRLEPIIKKHPEGTWENWIEAAFEQRISLSATGYFRGYKAFMDWEKGVGDPFPYYVYGAACSEVEIDCLTGAHKKIRTDIIMDACCSLNPAIDIGQIEGSFIQGMGLYTTEELKYSPEGILYSRSPDEYKIPTITDVPEEFNVSLLPSSQTPLTIYSSKGLGESGMFLGSSVFFAIADAVATVRRERDIAEDFMVQSPATPERVRMACADRFTKMIPRDDPETFKPWSIPIA.

A 2Fe-2S ferredoxin-type domain is found at 8-96 (DELVFFVNGR…GAAVTTVEGV (89 aa)). Cys47, Cys52, Cys55, and Cys78 together coordinate [2Fe-2S] cluster. A Mo-molybdopterin-binding site is contributed by Gln117. Positions 118, 121, 153, and 155 each coordinate [2Fe-2S] cluster. Cys155 lines the Mo-molybdopterin pocket. One can recognise an FAD-binding PCMH-type domain in the interval 240–425 (FYGERVTWIS…ESVHIPHSQK (186 aa)). FAD is bound by residues 268–275 (LVVGNTSL), Ala349, Ser358, His362, Asp371, and Leu415. Mo-molybdopterin-binding positions include 816-817 (GF), 1098-1101 (ASVG), Gln1213, and Leu1278. Glu1280 functions as the Proton acceptor; for azaheterocycle hydroxylase activity in the catalytic mechanism.

The protein belongs to the xanthine dehydrogenase family. Homodimer. [2Fe-2S] cluster is required as a cofactor. Requires FAD as cofactor. Mo-molybdopterin serves as cofactor. As to expression, only detected at very few levels in nasal mucosa.

The protein resides in the cytoplasm. It carries out the reaction an aldehyde + O2 + H2O = a carboxylate + H2O2 + H(+). Oxidase with broad substrate specificity, oxidizing aromatic azaheterocycles, such as phthalazine, as well as aldehydes, such as benzaldehyde and retinal. In Macaca fascicularis (Crab-eating macaque), this protein is Aldehyde oxidase 2 (AOX2).